The following is an 845-amino-acid chain: P protein (845 aa).

Residues 1–57 (MRLENREGRPTSGVLEMELPQASAPSRAGLGSLGLVGLDSSNHRPQQGGSKAGSRGP) are disordered. Topologically, residues 1–183 (MRLENREGRP…HLSKLRCCVQ (183 aa)) are extracellular. Residues 26 to 40 (SRAGLGSLGLVGLDS) show a composition bias toward low complexity. Residues 184 to 204 (WLKVSGLFVFVVLCSILFSLY) form a helical membrane-spanning segment. The Cytoplasmic portion of the chain corresponds to 205 to 337 (PDQGKFWQLL…QYLRASIEAQ (133 aa)). A helical transmembrane segment spans residues 338–358 (VTIAAVILAGVYVLIIFEIVH). Topologically, residues 359–360 (RT) are extracellular. A helical transmembrane segment spans residues 361-381 (LAAMLGSLAALAALAVIGDRP). Over 382 to 393 (TLTQVVEWIDFE) the chain is Cytoplasmic. Residues 394–414 (TLALLFGMMILVAIFSETGFF) form a helical membrane-spanning segment. At 415–429 (DYCAVKAYQLSRGRV) the chain is on the extracellular side. The chain crosses the membrane as a helical span at residues 430–450 (WAMIIMLCLIAAVLSAFLDNV). The Cytoplasmic segment spans residues 451–513 (TTALLFTPVT…ELRKMGLDFA (63 aa)). Residues 514–534 (GFTAHMFAGICFVLLFSFPLL) traverse the membrane as a helical segment. Residues 535–629 (RLLYWNRKLY…KKHRISDRTL (95 aa)) lie on the Extracellular side of the membrane. The helical transmembrane segment at 630–650 (LTKCVTVLGLVIFMFFLNSFV) threads the bilayer. P651 is a topological domain (cytoplasmic). The helical transmembrane segment at 652-672 (GVHLDLGWIAILGAIWLLILA) threads the bilayer. Residues 673-687 (DIHDFEIILHRVEWA) lie on the Extracellular side of the membrane. The helical transmembrane segment at 688-708 (TLLFFAALFILMEALAHLHLI) threads the bilayer. The Cytoplasmic portion of the chain corresponds to 709 to 730 (EYVGEQTALLIKMVPEDQRLAA). The chain crosses the membrane as a helical span at residues 731–751 (AIIVVVWVSAIASSLIDNIPF). Over 752–773 (TATMIPVLLNLSRDPEISLPAP) the chain is Extracellular. Residues 774–794 (PLMYALALGACLGGNGTLIGA) traverse the membrane as a helical segment. At 795–820 (SANVVCAGIAEQHGYGFSFMEFFRLG) the chain is on the cytoplasmic side. Residues 821-841 (FPMMVVSCMVGMCYLLVAHVV) form a helical membrane-spanning segment. Topologically, residues 842 to 845 (MGWN) are extracellular.

This sequence belongs to the CitM (TC 2.A.11) transporter family.

The protein localises to the melanosome membrane. The enzyme catalyses chloride(in) = chloride(out). In terms of biological role, contributes to a melanosome-specific anion (chloride) current that modulates melanosomal pH for optimal tyrosinase activity required for melanogenesis and the melanosome maturation. One of the components of the mammalian pigmentary system. May serve as a key control point at which ethnic skin color variation is determined. Major determinant of brown and/or blue eye color. Seems to regulate the post-translational processing of tyrosinase, which catalyzes the limiting reaction in melanin synthesis. This Sus scrofa (Pig) protein is P protein (Oca2).